A 344-amino-acid polypeptide reads, in one-letter code: Lipase chaperone (344 aa).

A helical transmembrane segment spans residues 14-34; it reads VAVYGAVGLAAIAGVAIWSGA. Positions 45 to 57 are enriched in low complexity; sequence LSADAAARDGASA. The tract at residues 45–78 is disordered; the sequence is LSADAAARDGASAAPPPPARPASAGMPSPLAGSS.

It belongs to the lipase chaperone family.

It is found in the cell inner membrane. Its function is as follows. May be involved in the folding of the extracellular lipase during its passage through the periplasm. In Burkholderia ambifaria (strain ATCC BAA-244 / DSM 16087 / CCUG 44356 / LMG 19182 / AMMD) (Burkholderia cepacia (strain AMMD)), this protein is Lipase chaperone.